Reading from the N-terminus, the 71-residue chain is UPF0346 protein BCQ_2236 (71 aa).

Belongs to the UPF0346 family.

The protein is UPF0346 protein BCQ_2236 of Bacillus cereus (strain Q1).